The sequence spans 252 residues: Imidazole glycerol phosphate synthase subunit HisF (252 aa).

Residues Asp13 and Asp132 contribute to the active site.

This sequence belongs to the HisA/HisF family. In terms of assembly, heterodimer of HisH and HisF.

Its subcellular location is the cytoplasm. The enzyme catalyses 5-[(5-phospho-1-deoxy-D-ribulos-1-ylimino)methylamino]-1-(5-phospho-beta-D-ribosyl)imidazole-4-carboxamide + L-glutamine = D-erythro-1-(imidazol-4-yl)glycerol 3-phosphate + 5-amino-1-(5-phospho-beta-D-ribosyl)imidazole-4-carboxamide + L-glutamate + H(+). The protein operates within amino-acid biosynthesis; L-histidine biosynthesis; L-histidine from 5-phospho-alpha-D-ribose 1-diphosphate: step 5/9. In terms of biological role, IGPS catalyzes the conversion of PRFAR and glutamine to IGP, AICAR and glutamate. The HisF subunit catalyzes the cyclization activity that produces IGP and AICAR from PRFAR using the ammonia provided by the HisH subunit. This Campylobacter curvus (strain 525.92) protein is Imidazole glycerol phosphate synthase subunit HisF.